The sequence spans 667 residues: Cylicin-1 (667 aa).

Disordered regions lie at residues 121–251 (PYTH…SSNV) and 275–634 (SQNN…ILPS). Over residues 129-172 (KKAESKKYKDDKKETALKKISKKDTGPHEVDEKPKRRNKADKTP) the composition is skewed to basic and acidic residues. Over residues 173 to 182 (SKSSHGSQLS) the composition is skewed to low complexity. Residues 187 to 197 (SKSETNPESKD) show a composition bias toward basic and acidic residues. Over residues 223-237 (STSTKKYSKSSKNNS) the composition is skewed to low complexity. Over residues 238–251 (DAVSETCSKNSSNV) the composition is skewed to polar residues. Basic and acidic residues-rich tracts occupy residues 284-326 (KKDA…KDTE), 345-371 (SKKD…DAKK), 380-394 (SKKD…KDAE), 417-431 (SKKD…KDAE), 438-464 (GDSK…KDAV), 483-506 (SKKD…KEST), 521-533 (SKKD…KKAT), 549-558 (KKTEMFKSSD), and 583-593 (DSKKDAVEPKR). Tandem repeats lie at residues 287–305 (AKKD…DSKD), 306–337 (AKKD…DSKD), 338–368 (AKKG…DSKD), 369–405 (AKKD…DSKD), 406–442 (AKKD…DSKN), 443–475 (AKKD…SEGD), 476–516 (AKKS…ESKK), 517–547 (VKRD…SKRY), and 548–569 (LKKT…FKPG). Residues 287 to 569 (AKKDAKGKGS…ESEESLFKPG (283 aa)) are 9 X approximate tandem repeats. Pro residues predominate over residues 624–633 (PLPPCEPILP).

As to quaternary structure, interacts with proteins of spermatozoa head including ACTL7A, CCIN, FAM209A and SPACA1; the interactions may be necessary for proper acrosome attachment to the nuclear envelope. In terms of tissue distribution, testis.

Its subcellular location is the cytoplasm. It is found in the cytoskeleton. The protein resides in the perinuclear theca. It localises to the calyx. Its function is as follows. Plays a role in the establishment of normal sperm morphology during spermatogenesis and is required for acrosome attachment to the nuclear envelope. This is Cylicin-1 (CYLC1) from Bos taurus (Bovine).